A 169-amino-acid chain; its full sequence is Large ribosomal subunit protein uL5 (169 aa).

The protein belongs to the universal ribosomal protein uL5 family. Part of the 50S ribosomal subunit; contacts the 5S rRNA and probably tRNA. Forms a bridge to the 30S subunit in the 70S ribosome.

Functionally, this is one of the proteins that bind and probably mediate the attachment of the 5S RNA into the large ribosomal subunit, where it forms part of the central protuberance. In the 70S ribosome it contacts protein S13 of the 30S subunit (bridge B1b), connecting the 2 subunits; this bridge is implicated in subunit movement. May contact the P site tRNA; the 5S rRNA and some of its associated proteins might help stabilize positioning of ribosome-bound tRNAs. This chain is Large ribosomal subunit protein uL5, found in Methanococcoides burtonii (strain DSM 6242 / NBRC 107633 / OCM 468 / ACE-M).